A 550-amino-acid chain; its full sequence is Probable terpene synthase 2 (550 aa).

Mg(2+)-binding residues include Asp305, Asp309, and Glu457. A DDXXD motif motif is present at residues 305 to 309; the sequence is DDIYD.

The protein belongs to the terpene synthase family. Mg(2+) is required as a cofactor.

Probable sesquiterpene synthase. This is Probable terpene synthase 2 (TPS2) from Ricinus communis (Castor bean).